We begin with the raw amino-acid sequence, 1303 residues long: Endoplasmic reticulum transmembrane helix translocase spfA (1303 aa).

The next 2 membrane-spanning stretches (helical) occupy residues 25 to 45 and 57 to 77; these read LHAYVWPFLIIWPAFFAVYLS and EWTFVWSGSIITAQSLLWLMT. Positions 158-191 are A-domain; part 1; that stretch reads KPPVKVFQQAQGLTSKEEIDRIQHHYGDNTFDIP. A run of 2 helical transmembrane segments spans residues 201–221 and 223–243; these read EHAVAPFFVFQVFCVGLWMLD and YWYYSLFTLFMLVVFESTVVW. An A-domain; part 2 region spans residues 256-408; the sequence is NIKPYDVWVY…LVRTMIYSTE (153 aa). Asn-287 carries an N-linked (GlcNAc...) asparagine glycan. Residues 415–435 traverse the membrane as a helical segment; it reads VEALLFILFLLIFAIAAAWYV. Asn-474 carries N-linked (GlcNAc...) asparagine glycosylation. The segment at 484–513 is P-domain; part 1; the sequence is AIFCTEPFRIPFAGRVDVACFDKTGTLTGE. Asp-505 acts as the 4-aspartylphosphate intermediate in catalysis. Mg(2+) is bound by residues Asp-505 and Thr-507. An ATP-binding site is contributed by 505–507; it reads DKT. The tract at residues 515-721 is N-domain; the sequence is LVVDGIAGLT…FAGFLVLQCP (207 aa). N-linked (GlcNAc...) asparagine glycosylation occurs at Asn-589. ATP contacts are provided by Phe-616 and Arg-678. The interval 724-883 is P-domain; part 2; it reads EDAIKAVRML…HVGVALLNGS (160 aa). Asn-734 is a glycosylation site (N-linked (GlcNAc...) asparagine). Residues Asp-746 and 862-866 each bind ATP; that span reads DGTND. Asp-862 serves as a coordination point for Mg(2+). An arm-like region spans residues 884-1019; the sequence is PEDLAKIAEH…ELDDSEPPTI (136 aa). Asn-958 carries N-linked (GlcNAc...) asparagine glycosylation. The tract at residues 1020–1035 is P-domain; part 3; that stretch reads KLGDASVAAPFTSKLA. Transmembrane regions (helical) follow at residues 1060 to 1080, 1082 to 1102, 1122 to 1142, 1201 to 1221, and 1239 to 1259; these read ILALNCLISAYSLSVIYLDGI, FGDGQVTISGMLMSVCFLSIS, VYIIGSVLGQFAIHIATLIYL, AMYWGLVAASGVAFSCATEFI, and VTLTVLMIIDYAGCWIIENVL. A disordered region spans residues 1277–1303; sequence DQLQREMERKKQEELETQAEKERQRKV.

Belongs to the cation transport ATPase (P-type) (TC 3.A.3) family. Type V subfamily. Requires Mg(2+) as cofactor.

It localises to the endoplasmic reticulum membrane. The enzyme catalyses [protein]-with a C-terminal TM segment(out) + ATP + H2O = [protein]-with a C-terminal TM segment(in) + ADP + phosphate + H(+). With respect to regulation, the ATPase activity is stimulated by phosphatidylinositol 4-phosphate (PI4P). Functionally, endoplasmic reticulum (ER) translocase required to remove mitochondrial transmembrane proteins mistargeted to the endoplasmic reticulum. Acts as a dislocase that mediates the ATP-dependent extraction of mislocalized mitochondrial transmembrane proteins from the endoplasmic reticulum membrane. Works in concert with the ER Ca(2+) pump srcA to support ER homeostasis. With srcA, also supports redox homeostasis and virulence. The sequence is that of Endoplasmic reticulum transmembrane helix translocase spfA from Aspergillus fumigatus (strain ATCC MYA-4609 / CBS 101355 / FGSC A1100 / Af293) (Neosartorya fumigata).